The following is a 104-amino-acid chain: MLNRVFLEGEIESSCWSVKKTGFLVTIKQMRFFGERLFTDYYVIYANGQLAYELEKHTKKYKTISIEGILRTYLERKSEIWKTTIEIVKIFNPKNEIVIDYKEI.

This is an uncharacterized protein from Mycoplasma pneumoniae (strain ATCC 29342 / M129 / Subtype 1) (Mycoplasmoides pneumoniae).